A 271-amino-acid polypeptide reads, in one-letter code: Formamidopyrimidine-DNA glycosylase (271 aa).

Residue Pro2 is the Schiff-base intermediate with DNA of the active site. Residue Glu3 is the Proton donor of the active site. The active-site Proton donor; for beta-elimination activity is the Lys58. The DNA site is built by His91 and Arg109. The segment at 236–270 (FVYGREGLACRVCATPVRRVVIGQRSTFFCPRCQR) adopts an FPG-type zinc-finger fold. Arg260 serves as the catalytic Proton donor; for delta-elimination activity.

Belongs to the FPG family. In terms of assembly, monomer. It depends on Zn(2+) as a cofactor.

It catalyses the reaction Hydrolysis of DNA containing ring-opened 7-methylguanine residues, releasing 2,6-diamino-4-hydroxy-5-(N-methyl)formamidopyrimidine.. The catalysed reaction is 2'-deoxyribonucleotide-(2'-deoxyribose 5'-phosphate)-2'-deoxyribonucleotide-DNA = a 3'-end 2'-deoxyribonucleotide-(2,3-dehydro-2,3-deoxyribose 5'-phosphate)-DNA + a 5'-end 5'-phospho-2'-deoxyribonucleoside-DNA + H(+). In terms of biological role, involved in base excision repair of DNA damaged by oxidation or by mutagenic agents. Acts as a DNA glycosylase that recognizes and removes damaged bases. Has a preference for oxidized purines, such as 7,8-dihydro-8-oxoguanine (8-oxoG). Has AP (apurinic/apyrimidinic) lyase activity and introduces nicks in the DNA strand. Cleaves the DNA backbone by beta-delta elimination to generate a single-strand break at the site of the removed base with both 3'- and 5'-phosphates. This Aromatoleum aromaticum (strain DSM 19018 / LMG 30748 / EbN1) (Azoarcus sp. (strain EbN1)) protein is Formamidopyrimidine-DNA glycosylase.